The sequence spans 721 residues: Peroxisomal fatty acid beta-oxidation multifunctional protein AIM1 (721 aa).

Glu116 (nucleophile) is an active-site residue. Glu136 (proton acceptor) is an active-site residue. The Microbody targeting signal signature appears at 719–721 (SKL).

This sequence in the N-terminal section; belongs to the enoyl-CoA hydratase/isomerase family. In the central section; belongs to the 3-hydroxyacyl-CoA dehydrogenase family. Widely expressed.

It localises to the peroxisome. The enzyme catalyses a (3S)-3-hydroxyacyl-CoA = a (2E)-enoyl-CoA + H2O. The catalysed reaction is a 4-saturated-(3S)-3-hydroxyacyl-CoA = a (3E)-enoyl-CoA + H2O. It catalyses the reaction (3S)-3-hydroxybutanoyl-CoA = (2E)-butenoyl-CoA + H2O. It carries out the reaction (3S)-hydroxyoctanoyl-CoA = (2E)-octenoyl-CoA + H2O. The enzyme catalyses (3S)-3-hydroxydodecanoyl-CoA = (2E)-dodecenoyl-CoA + H2O. The catalysed reaction is (3S)-hydroxytetradecanoyl-CoA = (2E)-tetradecenoyl-CoA + H2O. It catalyses the reaction (3S)-hydroxyhexanoyl-CoA = (2E)-hexenoyl-CoA + H2O. It carries out the reaction a (3Z)-enoyl-CoA = a 4-saturated (2E)-enoyl-CoA. The enzyme catalyses a (3E)-enoyl-CoA = a 4-saturated (2E)-enoyl-CoA. The catalysed reaction is (3S)-3-hydroxybutanoyl-CoA = (3R)-3-hydroxybutanoyl-CoA. It catalyses the reaction a (3S)-3-hydroxyacyl-CoA + NAD(+) = a 3-oxoacyl-CoA + NADH + H(+). It carries out the reaction (3S)-3-hydroxybutanoyl-CoA + NAD(+) = acetoacetyl-CoA + NADH + H(+). The enzyme catalyses (3S)-hydroxyhexanoyl-CoA + NAD(+) = 3-oxohexanoyl-CoA + NADH + H(+). The catalysed reaction is (3S)-hydroxyoctanoyl-CoA + NAD(+) = 3-oxooctanoyl-CoA + NADH + H(+). It catalyses the reaction (3S)-3-hydroxydodecanoyl-CoA + NAD(+) = 3-oxododecanoyl-CoA + NADH + H(+). It carries out the reaction (3S)-hydroxytetradecanoyl-CoA + NAD(+) = 3-oxotetradecanoyl-CoA + NADH + H(+). Its pathway is lipid metabolism; fatty acid beta-oxidation. Its function is as follows. Involved in peroxisomal fatty acid beta-oxidation. Required for wound-induced jasmonate biosynthesis. Possesses enoyl-CoA hydratase activity against short chain substrates (C4-C6) and 3-hydroxyacyl-CoA dehydrogenase activity against chains of variable sizes (C6-C16). Possesses cinnamoyl-CoA hydratase activity and is involved in the peroxisomal beta-oxidation pathway for the biosynthesis of benzoic acid (BA). Required for the accumulation in seeds of benzoylated glucosinolates (BGs) and substituted hydroxybenzoylated choline esters, which are BA-containing secondary metabolites. Required for salicylic acid (SA) in seeds. In Arabidopsis thaliana (Mouse-ear cress), this protein is Peroxisomal fatty acid beta-oxidation multifunctional protein AIM1 (AIM1).